Here is a 280-residue protein sequence, read N- to C-terminus: Transcription factor MYB46 (280 aa).

2 consecutive HTH myb-type domains span residues 15–67 and 68–122; these read VKKM…INYL and RPDL…KKRL. 2 DNA-binding regions (H-T-H motif) span residues 43 to 67 and 95 to 118; these read WSDV…INYL and WSQI…NSTI. The tract at residues 129-150 is disordered; the sequence is SNLINNSSSSPNTASDSSSNSA.

In terms of tissue distribution, expressed at low levels in stems and siliques, specifically in xylem.

The protein localises to the nucleus. Functionally, transcription activator. Involved in the regulation of secondary wall biosynthesis in fibers and vessels. Transcription activator of the mannan synthase CSLA9 that recognizes and binds to the DNA consensus sequence 5'-[AG][GT]T[AT]GGT[GA]-3' cis-regulatory element of CSLA9 promoter. Transcription factor that acts as a molecular switch in the NAC012/SND1-mediated transcriptional network regulating secondary wall biosynthesis. Is directly activated by NAC012/SND1. Functions redundantly with MYB83 in the transcriptional regulatory cascade leading to secondary wall formation in fibers and vessels. Transcription activator that binds to the DNA consensus sequence 5'-ACC[AT]A[AC][TC]-3', designated as the secondary wall MYB-responsive element (SMRE). Regulates directly numerous transcription factors and a number of genes involved in secondary wall biosynthesis that contain SMRE elements in their promoters. Is an obligate component of the transcriptional regulatory complex toward the commitment of secondary wall cellulose synthesis. Is required for functional expression of the three secondary wall CESA genes, CESA4, CESA7 and CESA8. The protein is Transcription factor MYB46 of Arabidopsis thaliana (Mouse-ear cress).